We begin with the raw amino-acid sequence, 101 residues long: Protein Tat (101 aa).

Positions 1 to 24 (MDPVDPNLEPWNHPGSQPKTPCNK) are interaction with human CREBBP. The interval 1–48 (MDPVDPNLEPWNHPGSQPKTPCNKCFCKVCCWHCQVCFLNKGLGISYG) is transactivation. 3 residues coordinate Zn(2+): Cys-22, Cys-25, and Cys-27. The segment at 22 to 37 (CNKCFCKVCCWHCQVC) is cysteine-rich. Lys-28 is subject to N6-acetyllysine; by host PCAF. Cys-30, His-33, Cys-34, and Cys-37 together coordinate Zn(2+). Residues 38–48 (FLNKGLGISYG) form a core region. Residues 48-57 (GRKKRKHRRG) are compositionally biased toward basic residues. Positions 48–101 (GRKKRKHRRGTPQSSKGHQDPVPKQPLPTTRGNPTGPKESKKEVASKAEADQCD) are disordered. The Nuclear localization signal, RNA-binding (TAR), and protein transduction motif lies at 49–57 (RKKRKHRRG). The tract at residues 49–86 (RKKRKHRRGTPQSSKGHQDPVPKQPLPTTRGNPTGPKE) is interaction with the host capping enzyme RNGTT. N6-acetyllysine; by host EP300 and GCN5L2 occurs at positions 50 and 51. Arg-52 carries the asymmetric dimethylarginine; by host PRMT6 modification. A Glycyl lysine isopeptide (Lys-Gly) (interchain with G-Cter in ubiquitin) cross-link involves residue Lys-71. The span at 85-101 (KESKKEVASKAEADQCD) shows a compositional bias: basic and acidic residues.

The protein belongs to the lentiviruses Tat family. As to quaternary structure, interacts with host CCNT1. Associates with the P-TEFb complex composed at least of Tat, P-TEFb (CDK9 and CCNT1), TAR RNA, RNA Pol II. Recruits the HATs CREBBP, TAF1/TFIID, EP300, PCAF and GCN5L2. Interacts with host KAT5/Tip60; this interaction targets the latter to degradation. Interacts with the host deacetylase SIRT1. Interacts with host capping enzyme RNGTT; this interaction stimulates RNGTT. Binds to host KDR, and to the host integrins ITGAV/ITGB3 and ITGA5/ITGB1. Interacts with host KPNB1/importin beta-1 without previous binding to KPNA1/importin alpha-1. Interacts with EIF2AK2. Interacts with host nucleosome assembly protein NAP1L1; this interaction may be required for the transport of Tat within the nucleus, since the two proteins interact at the nuclear rim. Interacts with host C1QBP/SF2P32; this interaction involves lysine-acetylated Tat. Interacts with the host chemokine receptors CCR2, CCR3 and CXCR4. Interacts with host DPP4/CD26; this interaction may trigger an anti-proliferative effect. Interacts with host LDLR. Interacts with the host extracellular matrix metalloproteinase MMP1. Interacts with host PRMT6; this interaction mediates Tat's methylation. Interacts with, and is ubiquitinated by MDM2/Hdm2. Interacts with host PSMC3 and HTATIP2. Interacts with STAB1; this interaction may overcome SATB1-mediated repression of IL2 and IL2RA (interleukin) in T cells by binding to the same domain than HDAC1. Interacts (when acetylated) with human CDK13, thereby increasing HIV-1 mRNA splicing and promoting the production of the doubly spliced HIV-1 protein Nef. Interacts with host TBP; this interaction modulates the activity of transcriptional pre-initiation complex. Interacts with host RELA. Interacts with host PLSCR1; this interaction negatively regulates Tat transactivation activity by altering its subcellular distribution. Post-translationally, asymmetrical arginine methylation by host PRMT6 seems to diminish the transactivation capacity of Tat and affects the interaction with host CCNT1. Acetylation by EP300, CREBBP, GCN5L2/GCN5 and PCAF regulates the transactivation activity of Tat. EP300-mediated acetylation of Lys-50 promotes dissociation of Tat from the TAR RNA through the competitive binding to PCAF's bromodomain. In addition, the non-acetylated Tat's N-terminus can also interact with PCAF. PCAF-mediated acetylation of Lys-28 enhances Tat's binding to CCNT1. Lys-50 is deacetylated by SIRT1. In terms of processing, polyubiquitination by host MDM2 does not target Tat to degradation, but activates its transactivation function and fosters interaction with CCNT1 and TAR RNA. Post-translationally, phosphorylated by EIF2AK2 on serine and threonine residues adjacent to the basic region important for TAR RNA binding and function. Phosphorylation of Tat by EIF2AK2 is dependent on the prior activation of EIF2AK2 by dsRNA.

The protein localises to the host nucleus. The protein resides in the host nucleolus. Its subcellular location is the host cytoplasm. It is found in the secreted. Transcriptional activator that increases RNA Pol II processivity, thereby increasing the level of full-length viral transcripts. Recognizes a hairpin structure at the 5'-LTR of the nascent viral mRNAs referred to as the transactivation responsive RNA element (TAR) and recruits the cyclin T1-CDK9 complex (P-TEFb complex) that will in turn hyperphosphorylate the RNA polymerase II to allow efficient elongation. The CDK9 component of P-TEFb and other Tat-activated kinases hyperphosphorylate the C-terminus of RNA Pol II that becomes stabilized and much more processive. Other factors such as HTATSF1/Tat-SF1, SUPT5H/SPT5, and HTATIP2 are also important for Tat's function. Besides its effect on RNA Pol II processivity, Tat induces chromatin remodeling of proviral genes by recruiting the histone acetyltransferases (HATs) CREBBP, EP300 and PCAF to the chromatin. This also contributes to the increase in proviral transcription rate, especially when the provirus integrates in transcriptionally silent region of the host genome. To ensure maximal activation of the LTR, Tat mediates nuclear translocation of NF-kappa-B by interacting with host RELA. Through its interaction with host TBP, Tat may also modulate transcription initiation. Tat can reactivate a latently infected cell by penetrating in it and transactivating its LTR promoter. In the cytoplasm, Tat is thought to act as a translational activator of HIV-1 mRNAs. In terms of biological role, extracellular circulating Tat can be endocytosed by surrounding uninfected cells via the binding to several surface receptors such as CD26, CXCR4, heparan sulfate proteoglycans (HSPG) or LDLR. Neurons are rarely infected, but they internalize Tat via their LDLR. Through its interaction with nuclear HATs, Tat is potentially able to control the acetylation-dependent cellular gene expression. Modulates the expression of many cellular genes involved in cell survival, proliferation or in coding for cytokines or cytokine receptors. Tat plays a role in T-cell and neurons apoptosis. Tat induced neurotoxicity and apoptosis probably contribute to neuroAIDS. Circulating Tat also acts as a chemokine-like and/or growth factor-like molecule that binds to specific receptors on the surface of the cells, affecting many cellular pathways. In the vascular system, Tat binds to ITGAV/ITGB3 and ITGA5/ITGB1 integrins dimers at the surface of endothelial cells and competes with bFGF for heparin-binding sites, leading to an excess of soluble bFGF. This is Protein Tat from Homo sapiens (Human).